A 1284-amino-acid chain; its full sequence is DNA-directed RNA polymerase subunit beta (1284 aa).

It belongs to the RNA polymerase beta chain family. The RNAP catalytic core consists of 2 alpha, 1 beta, 1 beta' and 1 omega subunit. When a sigma factor is associated with the core the holoenzyme is formed, which can initiate transcription.

It carries out the reaction RNA(n) + a ribonucleoside 5'-triphosphate = RNA(n+1) + diphosphate. Functionally, DNA-dependent RNA polymerase catalyzes the transcription of DNA into RNA using the four ribonucleoside triphosphates as substrates. This chain is DNA-directed RNA polymerase subunit beta, found in Mesoplasma florum (strain ATCC 33453 / NBRC 100688 / NCTC 11704 / L1) (Acholeplasma florum).